We begin with the raw amino-acid sequence, 843 residues long: RNA-binding protein 25 (843 aa).

Positions 1-30 are disordered; it reads MSFPPHLNRPPMGIPALPPGIPPPQFPGFP. Positions 12–30 are enriched in pro residues; sequence MGIPALPPGIPPPQFPGFP. The RRM domain maps to 87-164; it reads TTVFVGNISE…KKLLVKVDAK (78 aa). Lysine 135 bears the N6-acetyllysine mark. Disordered stretches follow at residues 171 to 202 and 219 to 243; these read EWKA…ETKR and SSEL…KKED. Phosphoserine occurs at positions 226 and 229. Glycyl lysine isopeptide (Lys-Gly) (interchain with G-Cter in SUMO2) cross-links involve residues lysine 261, lysine 273, and lysine 430. 2 stretches are compositionally biased toward basic and acidic residues: residues 280 to 433 and 521 to 573; these read EISK…KRDR and RLRD…ERRR. Disordered stretches follow at residues 280-442 and 498-688; these read EISK…DAYE and EFLE…KRKK. The tract at residues 285–644 is necessary for nuclear speckle localization; it reads RDTHKKLEEE…PNTPGDESPC (360 aa). A Glycyl lysine isopeptide (Lys-Gly) (interchain with G-Cter in SUMO2) cross-link involves residue lysine 578. At serine 583 the chain carries Phosphoserine. The segment covering 590-599 has biased composition (basic and acidic residues); sequence KQEKEEKREE. Positions 621–630 are enriched in low complexity; that stretch reads SSAPSVSSAS. A Glycyl lysine isopeptide (Lys-Gly) (interchain with G-Cter in SUMO2) cross-link involves residue lysine 671. Residues 674-683 are compositionally biased toward polar residues; the sequence is ASNSPGQPNS. A phosphoserine mark is found at serine 677 and serine 683. Residues lysine 688 and lysine 697 each participate in a glycyl lysine isopeptide (Lys-Gly) (interchain with G-Cter in SUMO2) cross-link. The residue at position 703 (serine 703) is a Phosphoserine. Lysine 722 is covalently cross-linked (Glycyl lysine isopeptide (Lys-Gly) (interchain with G-Cter in SUMO2)). Residues 750 to 843 enclose the PWI domain; sequence PELFAYPLDW…TEAKKIGLVK (94 aa).

In terms of assembly, interacts with LUC7L3 and SRRM1. Specifically associates with functional splicing complexes, including Sm proteins and U1, U2, U4, U5 and U6 snRNAs. Associates with exon junction complex (EJC) proteins, including APEX1, DDX39B, NCBP1, RBM8A and RNPS1. Interaction with NCBP1 is RNA-dependent. In terms of processing, sumoylated.

It localises to the nucleus speckle. It is found in the cytoplasm. In terms of biological role, RNA-binding protein that acts as a regulator of alternative pre-mRNA splicing. Involved in apoptotic cell death through the regulation of the apoptotic factor BCL2L1 isoform expression. Modulates the ratio of proapoptotic BCL2L1 isoform S to antiapoptotic BCL2L1 isoform L mRNA expression. When overexpressed, stimulates proapoptotic BCL2L1 isoform S 5'-splice site (5'-ss) selection, whereas its depletion caused the accumulation of antiapoptotic BCL2L1 isoform L. Promotes BCL2L1 isoform S 5'-ss usage through the 5'-CGGGCA-3' RNA sequence. Its association with LUC7L3 promotes U1 snRNP binding to a weak 5' ss in a 5'-CGGGCA-3'-dependent manner. Binds to the exonic splicing enhancer 5'-CGGGCA-3' RNA sequence located within exon 2 of the BCL2L1 pre-mRNA. Also involved in the generation of an abnormal and truncated splice form of SCN5A in heart failure. The chain is RNA-binding protein 25 (RBM25) from Homo sapiens (Human).